Consider the following 758-residue polypeptide: Polyribonucleotide nucleotidyltransferase (758 aa).

Residues Asp-482 and Asp-488 each contribute to the Mg(2+) site. One can recognise a KH domain in the interval 549-608 (PRVLSFYIDKDKISAAIGTKGKNIRSVCERSNAKIEIGDDGKVSVFAISSTEAEAAKNMM). Residues 618 to 686 (GSIIDAKVVK…KGGCPKLSRR (69 aa)) enclose the S1 motif domain. Positions 707 to 758 (DGLNNRDNYYNNSFNKKPEDNYHSNRPTRPRSGFSNRSRPKFGNNDSSSGFY) are disordered. The segment covering 711–721 (NRDNYYNNSFN) has biased composition (low complexity).

It belongs to the polyribonucleotide nucleotidyltransferase family. The cofactor is Mg(2+).

It localises to the cytoplasm. The enzyme catalyses RNA(n+1) + phosphate = RNA(n) + a ribonucleoside 5'-diphosphate. Involved in mRNA degradation. Catalyzes the phosphorolysis of single-stranded polyribonucleotides processively in the 3'- to 5'-direction. In Wolbachia pipientis subsp. Culex pipiens (strain wPip), this protein is Polyribonucleotide nucleotidyltransferase.